The primary structure comprises 170 residues: Alpha-crystallin A chain (170 aa).

Position 1 is an N-acetylmethionine (methionine 1). Positions 1 to 63 (MDVTIQQPWF…RTALDSGISE (63 aa)) are required for complex formation with BFSP1 and BFSP2. Glutamine 6 bears the Deamidated glutamine; partial mark. Residue serine 45 is modified to Phosphoserine. Glutamine 50 is subject to Deamidated glutamine; partial. The sHSP domain occupies 52–161 (LFRTALDSGI…SERPIPVSRE (110 aa)). Lysine 70 and lysine 99 each carry N6-acetyllysine. Residue histidine 100 coordinates Zn(2+). Asparagine 101 carries the post-translational modification Deamidated asparagine; partial. Positions 102, 107, and 151 each coordinate Zn(2+). Residues 144-170 (PKIVDPSHSERPIPVSREEKPSSAPSS) form a disordered region. Residues 148 to 164 (DPSHSERPIPVSREEKP) are compositionally biased toward basic and acidic residues. A glycan (O-linked (GlcNAc) serine) is linked at serine 159.

The protein belongs to the small heat shock protein (HSP20) family. Heteromer composed of three CRYAA and one CRYAB subunits. Inter-subunit bridging via zinc ions enhances stability, which is crucial as there is no protein turn over in the lens. Can also form homodimers and homotetramers (dimers of dimers) which serve as the building blocks of homooligomers. Within homooligomers, the zinc-binding motif is created from residues of 3 different molecules. His-100 and Glu-102 from one molecule are ligands of the zinc ion, and His-107 and His-151 residues from additional molecules complete the site with tetrahedral coordination geometry. Part of a complex required for lens intermediate filament formation composed of BFSP1, BFSP2 and CRYAA. Post-translationally, acetylation at Lys-70 may increase chaperone activity. Undergoes age-dependent proteolytical cleavage at the C-terminus.

Its subcellular location is the cytoplasm. It is found in the nucleus. In terms of biological role, contributes to the transparency and refractive index of the lens. Acts as a chaperone, preventing aggregation of various proteins under a wide range of stress conditions. Required for the correct formation of lens intermediate filaments as part of a complex composed of BFSP1, BFSP2 and CRYAA. This Bradypus variegatus (Brown-throated three-fingered sloth) protein is Alpha-crystallin A chain (CRYAA).